A 61-amino-acid chain; its full sequence is Large ribosomal subunit protein eL24 (61 aa).

Zn(2+) is bound by residues C7, C10, C33, and C37. The C4-type zinc-finger motif lies at 7–37 (CSFCGKEIPPATGLMYIRNDGSILWFCSNKC).

Belongs to the eukaryotic ribosomal protein eL24 family. Part of the 50S ribosomal subunit. Forms a cluster with proteins L3 and L14. Zn(2+) serves as cofactor.

Binds to the 23S rRNA. The sequence is that of Large ribosomal subunit protein eL24 from Sulfurisphaera tokodaii (strain DSM 16993 / JCM 10545 / NBRC 100140 / 7) (Sulfolobus tokodaii).